The following is a 27-amino-acid chain: Allergen C-C (27 aa).

The protein belongs to the protease inhibitor I6 (cereal trypsin/alpha-amylase inhibitor) family.

Its subcellular location is the secreted. The chain is Allergen C-C from Triticum aestivum (Wheat).